A 150-amino-acid polypeptide reads, in one-letter code: 3-hydroxyacyl-[acyl-carrier-protein] dehydratase FabZ (150 aa).

Residue H53 is part of the active site.

The protein belongs to the thioester dehydratase family. FabZ subfamily.

The protein localises to the cytoplasm. It carries out the reaction a (3R)-hydroxyacyl-[ACP] = a (2E)-enoyl-[ACP] + H2O. Functionally, involved in unsaturated fatty acids biosynthesis. Catalyzes the dehydration of short chain beta-hydroxyacyl-ACPs and long chain saturated and unsaturated beta-hydroxyacyl-ACPs. The sequence is that of 3-hydroxyacyl-[acyl-carrier-protein] dehydratase FabZ from Proteus mirabilis (strain HI4320).